The following is a 108-amino-acid chain: NADH dehydrogenase [ubiquinone] 1 alpha subcomplex subunit 8-A (108 aa).

CHCH domains follow at residues 28-69 and 70-108; these read GIRC…LKDL and HQRC…CPLK. Short sequence motifs (cx9C motif) lie at residues 31 to 41, 51 to 61, and 73 to 83; these read CMPENMAFLKC, CLEKGRDVTRC, and CPKEMDAYVGC. Intrachain disulfides connect Cys31–Cys61, Cys41–Cys51, Cys73–Cys105, and Cys83–Cys94. Residues 94-105 carry the Cx10C motif motif; sequence CRKEQEAFEKVC.

This sequence belongs to the complex I NDUFA8 subunit family. In terms of assembly, complex I is composed of at least 49 different subunits.

It localises to the mitochondrion. Its subcellular location is the mitochondrion intermembrane space. In terms of biological role, accessory subunit of the mitochondrial membrane respiratory chain NADH dehydrogenase (Complex I), that is believed not to be involved in catalysis. Complex I functions in the transfer of electrons from NADH to the respiratory chain. The immediate electron acceptor for the enzyme is believed to be ubiquinone. This is NADH dehydrogenase [ubiquinone] 1 alpha subcomplex subunit 8-A from Arabidopsis thaliana (Mouse-ear cress).